The chain runs to 143 residues: Phosphoribosyl-AMP cyclohydrolase (143 aa).

Residue D86 coordinates Mg(2+). C87 is a binding site for Zn(2+). The Mg(2+) site is built by D88 and D90. C103 and C110 together coordinate Zn(2+).

This sequence belongs to the PRA-CH family. Homodimer. Mg(2+) is required as a cofactor. Requires Zn(2+) as cofactor.

It localises to the cytoplasm. It catalyses the reaction 1-(5-phospho-beta-D-ribosyl)-5'-AMP + H2O = 1-(5-phospho-beta-D-ribosyl)-5-[(5-phospho-beta-D-ribosylamino)methylideneamino]imidazole-4-carboxamide. Its pathway is amino-acid biosynthesis; L-histidine biosynthesis; L-histidine from 5-phospho-alpha-D-ribose 1-diphosphate: step 3/9. Catalyzes the hydrolysis of the adenine ring of phosphoribosyl-AMP. This is Phosphoribosyl-AMP cyclohydrolase from Rhodospirillum rubrum (strain ATCC 11170 / ATH 1.1.1 / DSM 467 / LMG 4362 / NCIMB 8255 / S1).